Reading from the N-terminus, the 683-residue chain is Probable serine/threonine-protein kinase HAL5-like (683 aa).

Disordered regions lie at residues 1–90 (MPQQ…VSDE) and 157–200 (YPQN…SKKA). The segment covering 36–48 (PSSAATSDSSEMS) has biased composition (low complexity). Residues 50–60 (AQGGRGNGLLG) show a composition bias toward gly residues. The span at 69 to 85 (SPKSEAQFTQRNKSAES) shows a compositional bias: polar residues. Residues 364–670 (GKCIGMIGQG…IPKLLDTPWM (307 aa)) form the Protein kinase domain. Residues 370 to 378 (IGQGAYGTV) and Lys411 each bind ATP. Catalysis depends on Asp521, which acts as the Proton acceptor.

It belongs to the protein kinase superfamily. CAMK Ser/Thr protein kinase family. NPR/HAL subfamily. HAL5 sub-subfamily.

The catalysed reaction is L-seryl-[protein] + ATP = O-phospho-L-seryl-[protein] + ADP + H(+). It carries out the reaction L-threonyl-[protein] + ATP = O-phospho-L-threonyl-[protein] + ADP + H(+). In Eremothecium gossypii (strain ATCC 10895 / CBS 109.51 / FGSC 9923 / NRRL Y-1056) (Yeast), this protein is Probable serine/threonine-protein kinase HAL5-like.